The chain runs to 46 residues: Defensin Tk-AMP-D6 (46 aa).

Intrachain disulfides connect C3–C46, C14–C34, C20–C40, and C24–C42.

Its function is as follows. Plant defense peptide. The chain is Defensin Tk-AMP-D6 from Triticum kiharae (Wheat).